Here is a 677-residue protein sequence, read N- to C-terminus: Epithelial splicing regulatory protein 1 (677 aa).

RRM domains are found at residues 225–302, 326–406, and 445–525; these read TVVR…KATG, VIVR…RSTA, and DCVR…QCSA. Position 543 is a phosphoserine (serine 543). Arginine 578 bears the Omega-N-methylarginine mark.

Belongs to the ESRP family.

Its subcellular location is the nucleus. Its function is as follows. mRNA splicing factor that regulates the formation of epithelial cell-specific isoforms. Specifically regulates the expression of FGFR2-IIIb, an epithelial cell-specific isoform of FGFR2. Also regulates the splicing of CD44, CTNND1, ENAH, 3 transcripts that undergo changes in splicing during the epithelial-to-mesenchymal transition (EMT). Acts by directly binding specific sequences in mRNAs. Binds the GU-rich sequence motifs in the ISE/ISS-3, a cis-element regulatory region present in the mRNA of FGFR2. Regulates splicing and expression of genes involved in inner ear development, auditory hair cell differentiation, and cell fate specification in the cochlear epithelium. The sequence is that of Epithelial splicing regulatory protein 1 (Esrp1) from Rattus norvegicus (Rat).